We begin with the raw amino-acid sequence, 122 residues long: Large ribosomal subunit protein uL18 (122 aa).

This sequence belongs to the universal ribosomal protein uL18 family. Part of the 50S ribosomal subunit; part of the 5S rRNA/L5/L18/L25 subcomplex. Contacts the 5S and 23S rRNAs.

Functionally, this is one of the proteins that bind and probably mediate the attachment of the 5S RNA into the large ribosomal subunit, where it forms part of the central protuberance. The sequence is that of Large ribosomal subunit protein uL18 from Mycobacterium leprae (strain TN).